Here is a 250-residue protein sequence, read N- to C-terminus: Probable dihydroorotate dehydrogenase B (NAD(+)), electron transfer subunit (250 aa).

Positions Met1–Ile89 constitute an FAD-binding FR-type domain. [2Fe-2S] cluster contacts are provided by Cys200, Cys205, Cys208, and Cys216.

Belongs to the PyrK family. In terms of assembly, heterotetramer of 2 PyrK and 2 PyrD type B subunits. The cofactor is [2Fe-2S] cluster. FAD serves as cofactor.

The protein operates within pyrimidine metabolism; UMP biosynthesis via de novo pathway; orotate from (S)-dihydroorotate (NAD(+) route): step 1/1. Responsible for channeling the electrons from the oxidation of dihydroorotate from the FMN redox center in the PyrD type B subunit to the ultimate electron acceptor NAD(+). This is Probable dihydroorotate dehydrogenase B (NAD(+)), electron transfer subunit from Thermoplasma acidophilum (strain ATCC 25905 / DSM 1728 / JCM 9062 / NBRC 15155 / AMRC-C165).